We begin with the raw amino-acid sequence, 120 residues long: Large ribosomal subunit protein uL18 (120 aa).

This sequence belongs to the universal ribosomal protein uL18 family. As to quaternary structure, part of the 50S ribosomal subunit; part of the 5S rRNA/L5/L18/L25 subcomplex. Contacts the 5S and 23S rRNAs.

In terms of biological role, this is one of the proteins that bind and probably mediate the attachment of the 5S RNA into the large ribosomal subunit, where it forms part of the central protuberance. This is Large ribosomal subunit protein uL18 from Treponema pallidum (strain Nichols).